The chain runs to 492 residues: Alpha/beta hydrolase ucsC (492 aa).

Catalysis depends on Ser-258, which acts as the Nucleophile.

This sequence belongs to the AB hydrolase superfamily. FUS2 hydrolase family. As to quaternary structure, homodimer.

The protein operates within mycotoxin biosynthesis. Functionally, alpha/beta hydrolase; part of the gene cluster that mediates the biosynthesis of UCS1025A, a member of the pyrrolizidinone family that acts as a strong telomerase inhibitor and displays potent antibacterial and antitumor properties. These compounds share a hemiaminal-containing pyrrolizidinone core fused with a gamma-lactone, giving a furopyrrolizidine that is connected to a decalin fragment. The polyketide synthase module (PKS) of the PKS-NRPS ucsA is responsible for the synthesis of the polyketide backbone via the condensation of an acetyl-CoA starter unit with 6 malonyl-CoA units. The downstream nonribosomal peptide synthetase (NRPS) module then amidates the carboxyl end of the polyketide with a 2S,3S-methylproline derived from L-isoleucine by the 2-oxoglutarate-dependent dioxygenase ucsF which converts L-isoleucine to (4S,5S)-4-methylpyrroline-5-carboxylate that is further converted to 2S,3S-methylproline by the pyrroline-5-carboxylate reductase ucsG. Reductive release of the completed aminoacyl polyketide from the assembly line can form the 3-pyrrolin-2-one structure via an intramolecular Knoevenagel reaction. Because ucsA lacks a designated enoylreductase (ER) domain, the required activity is provided the enoyl reductase ucsL. This keto acyclic precursor is the substrate of the Diels-Alderase ucsH, that catalyzes the Diels-Alder cycloaddition. Oxidation of the 3S-methyl group to a carboxylate by the cytochrome P450 monooxygenase ucsK allows an oxa-Michael cyclization that might involve the reductase/dehydrogenase ucsI and which furnishes the furopyrrolizidine. The oxidase ucsJ likely plays a critical role in stereoselective reduction of the C5-C6 double bond to afford the required R-configured carboxylate group. Further enolization and oxidation at C5 by an unidentified enzyme affords the last intermediate that can undergo oxa-Michael cyclization to yield UCS1025A. This Acremonium sp protein is Alpha/beta hydrolase ucsC.